The sequence spans 404 residues: Cysteine desulfurase IscS (404 aa).

Pyridoxal 5'-phosphate is bound by residues 75–76 (AT), Asn155, Gln183, and 203–205 (SAH). Lys206 bears the N6-(pyridoxal phosphate)lysine mark. Position 243 (Thr243) interacts with pyridoxal 5'-phosphate. The active-site Cysteine persulfide intermediate is the Cys328. Position 328 (Cys328) interacts with [2Fe-2S] cluster.

Belongs to the class-V pyridoxal-phosphate-dependent aminotransferase family. NifS/IscS subfamily. As to quaternary structure, homodimer. Forms a heterotetramer with IscU, interacts with other sulfur acceptors. The cofactor is pyridoxal 5'-phosphate.

It is found in the cytoplasm. It carries out the reaction (sulfur carrier)-H + L-cysteine = (sulfur carrier)-SH + L-alanine. It participates in cofactor biosynthesis; iron-sulfur cluster biosynthesis. Master enzyme that delivers sulfur to a number of partners involved in Fe-S cluster assembly, tRNA modification or cofactor biosynthesis. Catalyzes the removal of elemental sulfur atoms from cysteine to produce alanine. Functions as a sulfur delivery protein for Fe-S cluster synthesis onto IscU, an Fe-S scaffold assembly protein, as well as other S acceptor proteins. This chain is Cysteine desulfurase IscS, found in Pseudomonas syringae pv. tomato (strain ATCC BAA-871 / DC3000).